A 564-amino-acid polypeptide reads, in one-letter code: Glutamate--tRNA ligase (564 aa).

A 'HIGH' region motif is present at residues 107 to 117; it reads PNPNGPPTLGS.

The protein belongs to the class-I aminoacyl-tRNA synthetase family. Glutamate--tRNA ligase type 2 subfamily.

The protein localises to the cytoplasm. It carries out the reaction tRNA(Glu) + L-glutamate + ATP = L-glutamyl-tRNA(Glu) + AMP + diphosphate. Its function is as follows. Catalyzes the attachment of glutamate to tRNA(Glu) in a two-step reaction: glutamate is first activated by ATP to form Glu-AMP and then transferred to the acceptor end of tRNA(Glu). This chain is Glutamate--tRNA ligase, found in Methanothrix thermoacetophila (strain DSM 6194 / JCM 14653 / NBRC 101360 / PT) (Methanosaeta thermophila).